Here is a 1001-residue protein sequence, read N- to C-terminus: Translation initiation factor IF-2 (1001 aa).

The interval 56 to 418 (PDYVHDPNAV…VEAGPPPISR (363 aa)) is disordered. Residues 70 to 84 (TEAHEERHEHEEAHE) are compositionally biased toward basic and acidic residues. Low complexity predominate over residues 85–108 (PAAAPKAAVEPETPVAPAPEAAPA). Residues 109–120 (AKEERPAPEEPA) are compositionally biased toward basic and acidic residues. 6 stretches are compositionally biased toward pro residues: residues 136–170 (IHPP…PHAP), 180–194 (PARP…PSQT), 204–217 (RPAP…PTTT), 229–252 (QPFP…PPQQ), 305–322 (PAAP…PVPG), and 345–357 (GMPP…PRPQ). The segment covering 379 to 410 (SRGRPGDRRPVRQQRERTEEEKILRPQRRHVE) has biased composition (basic and acidic residues). Residues 499–668 (RRAPVVTIMG…LLVADMQDLK (170 aa)) enclose the tr-type G domain. A G1 region spans residues 508-515 (GHVDHGKT). 508-515 (GHVDHGKT) serves as a coordination point for GTP. Residues 533-537 (GITQH) are G2. Residues 554–557 (DTPG) form a G3 region. GTP contacts are provided by residues 554-558 (DTPGH) and 608-611 (NKID). The interval 608–611 (NKID) is G4. A G5 region spans residues 644–646 (SAR).

Belongs to the TRAFAC class translation factor GTPase superfamily. Classic translation factor GTPase family. IF-2 subfamily.

It is found in the cytoplasm. One of the essential components for the initiation of protein synthesis. Protects formylmethionyl-tRNA from spontaneous hydrolysis and promotes its binding to the 30S ribosomal subunits. Also involved in the hydrolysis of GTP during the formation of the 70S ribosomal complex. This chain is Translation initiation factor IF-2, found in Solibacter usitatus (strain Ellin6076).